Consider the following 188-residue polypeptide: Elongation factor P (188 aa).

Belongs to the elongation factor P family.

It localises to the cytoplasm. The protein operates within protein biosynthesis; polypeptide chain elongation. Functionally, involved in peptide bond synthesis. Stimulates efficient translation and peptide-bond synthesis on native or reconstituted 70S ribosomes in vitro. Probably functions indirectly by altering the affinity of the ribosome for aminoacyl-tRNA, thus increasing their reactivity as acceptors for peptidyl transferase. This chain is Elongation factor P, found in Rickettsia peacockii (strain Rustic).